The following is a 440-amino-acid chain: Rhamnogalacturonase A (440 aa).

Residues 1–18 (MRALFLLALGSIPALVSG) form the signal peptide. Cys39 and Cys65 are disulfide-bonded. Asn50 carries N-linked (GlcNAc...) asparagine glycosylation. Asp215 functions as the Proton donor in the catalytic mechanism. A disulfide bridge connects residues Cys217 and Cys234. His290 is an active-site residue. N-linked (GlcNAc...) asparagine glycosylation is present at Asn317. Disulfide bonds link Cys340–Cys346 and Cys368–Cys377. Thr385 carries O-linked (Man) threonine glycosylation. O-linked (Man) serine glycosylation occurs at Ser386. Residues Thr388, Thr389, and Thr390 are each glycosylated (O-linked (Man) threonine). O-linked (Man) serine glycosylation is present at Ser391. O-linked (Man) threonine glycosylation is found at Thr392 and Thr394. O-linked (Man) serine glycosylation is found at Ser398 and Ser401. Thr403, Thr404, and Thr416 each carry an O-linked (Man) threonine glycan. O-linked (Man) serine glycosylation is present at Ser418. Residues Thr423 and Thr426 are each glycosylated (O-linked (Man) threonine). O-linked (Man) serine glycosylation is found at Ser427 and Ser436.

The protein belongs to the glycosyl hydrolase 28 family. Post-translationally, the N-terminus is blocked. N-glycosylated and may also be O-glycosylated.

The protein localises to the secreted. It carries out the reaction Endohydrolysis of alpha-D-GalA-(1-&gt;2)-alpha-L-Rha glycosidic bond in the rhamnogalacturonan I backbone with initial inversion of anomeric configuration releasing oligosaccharides with beta-D-GalA at the reducing end.. In terms of biological role, pectinolytic enzymes consist of four classes of enzymes: pectine lyase, polygalacturonase, pectin methylesterase and rhamnogalacturonase. Has a positive effect in the apple hot-mash liquefaction process. Hydrolyzes alpha-D-galacturonopyranosyl-(1,2)-alpha-L-rhamnopyranosyl linkages in the backbone of the hairy regions of pectins. The protein is Rhamnogalacturonase A (rhgA) of Aspergillus aculeatus.